We begin with the raw amino-acid sequence, 354 residues long: G-protein coupled receptor homolog US28 (354 aa).

Over 1–37 the chain is Extracellular; the sequence is MTPTTTTAELTTEFDYDEDATPCVFTDVLNQSKPVTL. Residue asparagine 30 is glycosylated (N-linked (GlcNAc...) asparagine; by host). A helical transmembrane segment spans residues 38 to 58; that stretch reads FLYGVVFLFGSIGNFLVIFTI. Residues 59–69 are Cytoplasmic-facing; the sequence is TWRRRIQCSGD. A helical transmembrane segment spans residues 70 to 90; that stretch reads VYFINLAAADLLFVCTLPLWM. At 91 to 101 the chain is on the extracellular side; that stretch reads QYLLDHNSLAS. A helical membrane pass occupies residues 102–122; it reads VPCTLLTACFYVAMFASLCFI. The Cytoplasmic segment spans residues 123 to 145; the sequence is TEIALDRYYAIVYMRYRPVKQAC. The chain crosses the membrane as a helical span at residues 146-166; sequence LFSIFWWIFAVIIAIPHFMVV. Residues 167-183 lie on the Extracellular side of the membrane; that stretch reads TKKDNQCMTDYDYLEVS. Residues 184-204 traverse the membrane as a helical segment; that stretch reads YPIILNVELMLGAFVIPLSVI. At 205–228 the chain is on the cytoplasmic side; it reads SYCYYRISRIVAVSQSRHKGRIVR. A helical transmembrane segment spans residues 229 to 249; it reads VLIAVVLVFIIFWLPYHLTLF. Residues 250–273 are Extracellular-facing; that stretch reads VDTLKLLKWISSSCEFERSLKRAL. A helical membrane pass occupies residues 274-294; the sequence is ILTESLAFCHCCLNPLLYVFV. Residues 295–354 lie on the Cytoplasmic side of the membrane; it reads GTKFRQELHCLLAEFRQRLFSRDVSWYHSMSFSRRSSPSRRETSSDTLSDEVCRVSQIIP.

It belongs to the G-protein coupled receptor 1 family. In terms of assembly, interacts with host GPRASP1; this interaction targets US28 to lysosomes for degradation. Interacts with host CX3CL1/Fractalkine (via N-terminus). Interacts with host Gi alpha-1 subunit GNAI1; this interaction does not lead to the catalytic activation of Gi complex. In terms of processing, phosphorylated. High phosphorylation occurs concomitantly with receptor endocytosis and correlate with low receptor presence at the plasma membrane.

It is found in the host cell membrane. In terms of biological role, binds to a great number of different CC-chemokines including CCL5/RANTES, CCL2/MCP-1, CCL3/MIP-1-alpha as well as CX3CL1/Fractalkine. Transduces signals resulting in the activation of MAP kinase signaling pathways and augmentation of intracellular calcium ion levels, leading to alterations in chemotactic behavior of vascular smooth muscle cells and macrophages. The US28 receptor also exhibits high levels of agonist-independent signaling activity and agonist-independent endocytosis. Interacts with the host Gi complex without activating it, thereby probably interfering with the chemokine-Gi signaling. May also function as a G protein sink to sequester G protein from the cell surface via internalization. Interacts with endogenous Gaq/11 subunits and thereby constitutively activates phospholipase C. The polypeptide is G-protein coupled receptor homolog US28 (US28) (Homo sapiens (Human)).